We begin with the raw amino-acid sequence, 306 residues long: Curved DNA-binding protein (306 aa).

The J domain occupies 5 to 69 (DYYAIMGVKP…QRRAEYDQMW (65 aa)).

The protein resides in the cytoplasm. The protein localises to the nucleoid. In terms of biological role, DNA-binding protein that preferentially recognizes a curved DNA sequence. It is probably a functional analog of DnaJ; displays overlapping activities with DnaJ, but functions under different conditions, probably acting as a molecular chaperone in an adaptive response to environmental stresses other than heat shock. Lacks autonomous chaperone activity; binds native substrates and targets them for recognition by DnaK. Its activity is inhibited by the binding of CbpM. The chain is Curved DNA-binding protein from Escherichia fergusonii (strain ATCC 35469 / DSM 13698 / CCUG 18766 / IAM 14443 / JCM 21226 / LMG 7866 / NBRC 102419 / NCTC 12128 / CDC 0568-73).